A 66-amino-acid polypeptide reads, in one-letter code: Opicalcin-2 (66 aa).

The first 22 residues, 1 to 22, serve as a signal peptide directing secretion; sequence MKPSLIIVTFIVVFMTISCVAA. Residues 23–31 constitute a propeptide that is removed on maturation; that stretch reads DDEQETWIE. Intrachain disulfides connect C36/C50, C43/C54, and C49/C65. Residues 55–57 form an essential for stimulation of [3H]ryanodine binding to RYR1 region; that stretch reads KRR.

It belongs to the scorpion calcin family. As to expression, expressed by the venom gland.

The protein resides in the secreted. This toxin stabilizes ryanodine receptor 1 (RyR1) opening in a long-lasting subconductance state (40% of the full conductance state). Furthermore, it triggers calcium release from sarcoplasmic vesicles (64.2 nM are enough to induce a sharp release, and 50% of the total calcium is released after toxin (100 nM) addition) probably by acting as a cell-penetrating peptide (CPP). In addition, it has been shown to dose-dependently stimulate ryanodine binding to RyR1 (EC(50)=3.2 nM). It also augments the bell-shaped calcium-[3H]ryanodine binding curve that is maximal at about 10 uM calcium concentration. It binds a different site as ryanodine. It acts synergistically with caffeine. In vivo, intracerebroventricular injection into mice induces neurotoxic symptoms, followed by death. The polypeptide is Opicalcin-2 (Opistophthalmus carinatus (African yellow leg scorpion)).